We begin with the raw amino-acid sequence, 148 residues long: MKVIFTQDVKGKGKKGEIKEVPVGYANNFLLKNKLAVEATPGNLKQLEAQKKRVEADKQQELEDAQALKEKLEALEVNVTAKSGEGGRLFGSVSSKQVADALNKQHGIKIDKRKMDLHDGIRSLGYTNVPVKLHNKVIGTLKVHVTEA.

This sequence belongs to the bacterial ribosomal protein bL9 family.

Its function is as follows. Binds to the 23S rRNA. The chain is Large ribosomal subunit protein bL9 from Macrococcus caseolyticus (strain JCSC5402) (Macrococcoides caseolyticum).